Here is an 832-residue protein sequence, read N- to C-terminus: Ventricular zone-expressed PH domain-containing protein homolog 1 (832 aa).

Residues 201-319 (AELLALMSQL…RYLVSQLANM (119 aa)) are interaction with TGFBR1. The disordered stretch occupies residues 497-519 (DTHGSQLRNSSASHPSIIHSEPE). Positions 499–510 (HGSQLRNSSASH) are enriched in polar residues. An interaction with TGFBR1 region spans residues 663–832 (ESTFPQQKDL…RESREVTTYL (170 aa)). The PH domain maps to 716 to 818 (QPLIEGKLKE…WLQCINVALA (103 aa)).

Belongs to the MELT/VEPH family. As to quaternary structure, interacts with TGFBR1.

Its subcellular location is the cell membrane. In terms of biological role, interacts with TGF-beta receptor type-1 (TGFBR1) and inhibits dissociation of activated SMAD2 from TGFBR1, impeding its nuclear accumulation and resulting in impaired TGF-beta signaling. May also affect FOXO, Hippo and Wnt signaling. In Rattus norvegicus (Rat), this protein is Ventricular zone-expressed PH domain-containing protein homolog 1 (Veph1).